The chain runs to 300 residues: Free fatty acid receptor 1 (300 aa).

At 1-8 (MDLPPQLS) the chain is on the extracellular side. A helical transmembrane segment spans residues 9-31 (FALYVSAFALGFPLNLLAIRGAV). The Cytoplasmic portion of the chain corresponds to 32–41 (SHAKLRLTPS). Residues 42 to 64 (LVYTLHLGCSDLLLAITLPLKAV) traverse the membrane as a helical segment. At 65 to 79 (EALASGAWPLPLPFC) the chain is on the extracellular side. A disulfide bridge connects residues cysteine 79 and cysteine 170. A helical transmembrane segment spans residues 80-101 (PVFALAHFAPLYAGGGFLAALS). The Cytoplasmic portion of the chain corresponds to 102–121 (AGRYLGAAFPFGYQAIRRPR). Residues 122–142 (YSWGVCVAIWALVLCHLGLAL) form a helical membrane-spanning segment. Over 143–178 (GLETSGSWLDNSTSSLGINIPVNGSPVCLEAWDPDS) the chain is Extracellular. Asparagine 153 carries N-linked (GlcNAc...) asparagine glycosylation. The chain crosses the membrane as a helical span at residues 179 to 200 (ARPARLSFSILLFFLPLVITAF). Residues 201-223 (CYVGCLRALVRSGLSHKRKLRAA) lie on the Cytoplasmic side of the membrane. Residues 224 to 248 (WVAGGALLTLLLCLGPYNASNVASF) traverse the membrane as a helical segment. Residues 249-256 (INPDLGGS) lie on the Extracellular side of the membrane. The chain crosses the membrane as a helical span at residues 257-279 (WRKLGLITGAWSVVLNPLVTGYL). Residues 280–300 (GTGPGRGTICVTRTQRGTIQK) are Cytoplasmic-facing.

Belongs to the G-protein coupled receptor 1 family. Expressed in pancreatic islet beta cells (at protein level). Expressed in pancreatic islet beta cells.

It is found in the cell membrane. With respect to regulation, is also activated by synthetic agonists, such as AM-8182, AM-6331 and TAK-875 (fasiglifam). AM-8182 is a full agonist, while AM-6331 and TAK-875 (fasiglifam) are partial agonists that potentiate the activity of the endogenous ligands, such as alpha-linolenic acid and gamma-linolenic acid. Its function is as follows. G-protein coupled receptor for medium and long chain saturated and unsaturated fatty acids that plays an important role in glucose homeostasis. Fatty acid binding increases glucose-stimulated insulin secretion, and may also enhance the secretion of glucagon-like peptide 1 (GLP-1). May also play a role in bone homeostasis; receptor signaling activates pathways that inhibit osteoclast differentiation. Ligand binding leads to a conformation change that triggers signaling via G-proteins that activate phospholipase C, leading to an increase of the intracellular calcium concentration. Seems to act through a G(q) and G(i)-mediated pathway. Mediates the anti-inflammatory effects of omega-3 polyunsaturated fatty acids (PUFAs) via inhibition of NLRP3 inflammasome activation. This is Free fatty acid receptor 1 (Ffar1) from Mus musculus (Mouse).